Consider the following 422-residue polypeptide: 3-phosphoshikimate 1-carboxyvinyltransferase (422 aa).

Residues K20, S21, and R25 each coordinate 3-phosphoshikimate. A phosphoenolpyruvate-binding site is contributed by K20. Residues G90 and R118 each contribute to the phosphoenolpyruvate site. 3-phosphoshikimate contacts are provided by S161, S162, Q163, S189, D305, and K332. Position 163 (Q163) interacts with phosphoenolpyruvate. D305 (proton acceptor) is an active-site residue. Phosphoenolpyruvate contacts are provided by R336 and R378.

It belongs to the EPSP synthase family. Monomer.

It is found in the cytoplasm. The enzyme catalyses 3-phosphoshikimate + phosphoenolpyruvate = 5-O-(1-carboxyvinyl)-3-phosphoshikimate + phosphate. It functions in the pathway metabolic intermediate biosynthesis; chorismate biosynthesis. Its function is as follows. Catalyzes the transfer of the enolpyruvyl moiety of phosphoenolpyruvate (PEP) to the 5-hydroxyl of shikimate-3-phosphate (S3P) to produce enolpyruvyl shikimate-3-phosphate and inorganic phosphate. The chain is 3-phosphoshikimate 1-carboxyvinyltransferase from Nitrosopumilus maritimus (strain SCM1).